A 684-amino-acid chain; its full sequence is ATP-dependent zinc metalloprotease FtsH (684 aa).

The Cytoplasmic portion of the chain corresponds to 1 to 21 (MENKNDMFNKTPKSGKPKMFR). A helical transmembrane segment spans residues 22-42 (FNLYWMYGLIFIMLVALYMTN). At 43–138 (DSSGTKELGW…QVRFEEGDDA (96 aa)) the chain is on the periplasmic side. Residues 139 to 159 (IWNFLVSFGPIILLIGVWMFL) traverse the membrane as a helical segment. Residues 160-684 (MRRMSGGTGA…TEENKTGKIA (525 aa)) are Cytoplasmic-facing. Residue 236 to 243 (GPPGTGKT) coordinates ATP. Residue His-459 participates in Zn(2+) binding. Residue Glu-460 is part of the active site. 2 residues coordinate Zn(2+): His-463 and Asp-534. Positions 647-662 (EKANGKNKENADKEAE) are enriched in basic and acidic residues. The segment at 647–684 (EKANGKNKENADKEAEADATTENVTDTPTEENKTGKIA) is disordered.

It in the central section; belongs to the AAA ATPase family. The protein in the C-terminal section; belongs to the peptidase M41 family. In terms of assembly, homohexamer. Requires Zn(2+) as cofactor.

The protein resides in the cell inner membrane. Its function is as follows. Acts as a processive, ATP-dependent zinc metallopeptidase for both cytoplasmic and membrane proteins. Plays a role in the quality control of integral membrane proteins. The polypeptide is ATP-dependent zinc metalloprotease FtsH (Parabacteroides distasonis (strain ATCC 8503 / DSM 20701 / CIP 104284 / JCM 5825 / NCTC 11152)).